The primary structure comprises 442 residues: 23S rRNA (uracil(1939)-C(5))-methyltransferase RlmD (442 aa).

The TRAM domain maps to 12–70; the sequence is SKQLSAKVTLEVTKLDHLGAGMAQHQGKIVFIPGALPNEKVTVQLTEQKKRHARAKLLK. The [4Fe-4S] cluster site is built by cysteine 83, cysteine 89, cysteine 92, and cysteine 171. Residues glutamine 276, phenylalanine 305, asparagine 310, glutamate 326, aspartate 353, and aspartate 373 each coordinate S-adenosyl-L-methionine. The Nucleophile role is filled by cysteine 399.

This sequence belongs to the class I-like SAM-binding methyltransferase superfamily. RNA M5U methyltransferase family. RlmD subfamily.

It carries out the reaction uridine(1939) in 23S rRNA + S-adenosyl-L-methionine = 5-methyluridine(1939) in 23S rRNA + S-adenosyl-L-homocysteine + H(+). In terms of biological role, catalyzes the formation of 5-methyl-uridine at position 1939 (m5U1939) in 23S rRNA. In Shewanella sediminis (strain HAW-EB3), this protein is 23S rRNA (uracil(1939)-C(5))-methyltransferase RlmD.